Here is a 589-residue protein sequence, read N- to C-terminus: MSGVSNKTVSINGWYGMPIHLLREEGDFAQFMILTINELKIAIHGYLRNTPWYNMLKDYLFVIFCYKLISNFFYLLKVYGPVRLAVRTYEHSSRRLFRWLLDSPFLRGTVEKEVTKVKQSIEDELIRSDSQLMNFPQLPSNGIPQDDVIEELNKLNDLIPHTQWKEGKVSGAVYHGGDDLIHLQTIAYEKYCVANQLHPDVFPAVRKMESEVVSMVLRMFNAPSDTGCGTTTSGGTESLLLACLSAKMYALHHRGITEPEIIAPVTAHAGFDKAAYYFGMKLRHVELDPTTYQVDLGKVKKFINKNTILLVGSAPNFPHGIADDIEGLGKIAQKYKLPLHVDSCLGSFIVSFMEKAGYKNLPLLDFRVPGVTSISCDTHKYGFAPKGSSVIMYRNSDLRMHQYYVNPAWTGGLYGSPTLAGSRPGAIVVGCWATMVNMGENGYIESCQEIVGAAMKFKKYIQENIPDLNIMGNPRYSVISFSSKTLNIHELSDRLSKKGWHFNALQKPVALHMAFTRLSAHVVDEICDILRTTVQELKSESNSKPSPDGTSALYGVAGSVKTAGVADKLIVGFLDALYKLGPGEDTATK.

Topologically, residues 1-58 are lumenal; sequence MSGVSNKTVSINGWYGMPIHLLREEGDFAQFMILTINELKIAIHGYLRNTPWYNMLKD. A glycan (N-linked (GlcNAc...) asparagine) is linked at Asn-6. The chain crosses the membrane as a helical span at residues 59-76; it reads YLFVIFCYKLISNFFYLL. The Cytoplasmic segment spans residues 77–589; that stretch reads KVYGPVRLAV…LGPGEDTATK (513 aa). Lys-380 is modified (N6-(pyridoxal phosphate)lysine).

Belongs to the group II decarboxylase family. Sphingosine-1-phosphate lyase subfamily. As to quaternary structure, homodimer. The cofactor is pyridoxal 5'-phosphate. Glycosylated.

Its subcellular location is the endoplasmic reticulum membrane. The catalysed reaction is sphinganine 1-phosphate = hexadecanal + phosphoethanolamine. The enzyme catalyses (4R)-hydroxysphinganine 1-phosphate = (2R)-hydroxyhexadecanal + phosphoethanolamine. It functions in the pathway lipid metabolism; sphingolipid metabolism. In terms of biological role, sphingosine-1-phosphate lyase that cleaves phosphorylated sphingoid bases (PSBs), such as sphingosine-1-phosphate, into fatty aldehydes and phosphoethanolamine. Prefers C-16 dihydrosphingosine-l-phosphate (DHS-P) as a substrate. Regulates intracellular levels of sphingolipid long-chain base phosphates (LCBPs). Plays a role in the regulation of global responses to nutrient deprivation in yeast. The protein is Sphingosine-1-phosphate lyase of Saccharomyces cerevisiae (strain ATCC 204508 / S288c) (Baker's yeast).